The sequence spans 444 residues: MEKLASLYHEHISTLQQRTCEALARNQFDALLIHSGELQHIFLDDRDYPFKVNACFKAWVPVTKVPNCWLWVDGINKPKLWFYSPVDYWHSVEPLPTSYWTKEVEMIHLANAGDINSALSTYVKQNVAYIGCSPQRAKEIGFSERNINPKSVLDYLHFHRSYKTDYELVCMREAQKTAIVGHLAAYEAFQAGMSEFDINISYLMATGHRDTDVPYNNIIAMNENAAVLHYTALQHNAPSDIRSFLIDAGAEYNGYAADITRTYSAKSNNEFASLIKDMDAEQKALISTIKVGTRYTEYHIQMHHRIAKLLKKYGIVKDVSEEVMVEEGLTTPFFPHGIGHPLGLQVHDVAGFMQDDTGTHLAAPDMYPYLRCTRILEPRMVLTIEPGLYFIESLLAPWRESEFSKHFDWNKIGTLKLFGGIRIEDNIVIHENKVENMTRDLQLP.

Mn(2+) is bound by residues D247, D258, H340, E385, and E424.

The protein belongs to the peptidase M24B family. Bacterial-type prolidase subfamily. The cofactor is Mn(2+).

It catalyses the reaction Xaa-L-Pro dipeptide + H2O = an L-alpha-amino acid + L-proline. Its function is as follows. Splits dipeptides with a prolyl residue in the C-terminal position. This chain is Xaa-Pro dipeptidase, found in Photorhabdus laumondii subsp. laumondii (strain DSM 15139 / CIP 105565 / TT01) (Photorhabdus luminescens subsp. laumondii).